A 341-amino-acid polypeptide reads, in one-letter code: Phenylalanine--tRNA ligase alpha subunit (341 aa).

Position 256 (Glu-256) interacts with Mg(2+).

Belongs to the class-II aminoacyl-tRNA synthetase family. Phe-tRNA synthetase alpha subunit type 1 subfamily. As to quaternary structure, tetramer of two alpha and two beta subunits. Mg(2+) serves as cofactor.

Its subcellular location is the cytoplasm. It catalyses the reaction tRNA(Phe) + L-phenylalanine + ATP = L-phenylalanyl-tRNA(Phe) + AMP + diphosphate + H(+). In Leptospira biflexa serovar Patoc (strain Patoc 1 / Ames), this protein is Phenylalanine--tRNA ligase alpha subunit.